A 461-amino-acid chain; its full sequence is UDP-glucosyltransferase 1 (461 aa).

The protein belongs to the UDP-glycosyltransferase family.

The protein operates within secondary metabolite biosynthesis. Functionally, UDP-glucosyltransferase; part of the pathway that mediates the biosynthesis of tenellin-type 2-pyridones, iron-chelating compounds involved in iron stress tolerance, competition with the natural competitor fungus Metarhizium robertsii and insect hosts infection. Targets the N-OH hydroxyl residue of 15-hydroxytellenin (15-HT) to produce pyridovericin-N-O-(beta-D-glucopyranoside) which is further methylated by the methyltransferase MT1 to yield pyridovericin-N-O-(4-O-methyl-beta-D-glucopyranoside) (PMGP). The pathway begins with the assembly of the polyketide-amino acid backbone by the hybrid PKS-NRPS tenS with the help of the enoyl reductase tenC. These enzymes catalyze the synthesis of the pyrrolidine-2-dione intermediates pretellinin A, 11-hydropretellenin A, 12-hydropretellenin A, 13-hydropretellenin A, 14-hydropretellenin A, 12-oxopretellenin A and prototellinin D. The cytochrome P450 monooxygenase tenA then catalyzes an oxidative ring expansion of pretenellin A and 14-hydropretellenin A to form the 2-pyridone core, leading to pretenellin B and pyridovericin, respectively. The cytochrome P450 monooxygenase tenB is then required for the selective N-hydroxylation of the 2-pyridone nitrogen of yield tellinin and 15-hydroxytellenin (15-HT), respectively. The UDP-glucosyltransferase GT1 and the methyltransferase MT1, located outside the tenS gene cluster, contribute to the stepwise glycosylation and methylation of 15-HT to obtain the glycoside pyridovericin-N-O-(4-O-methyl-beta-D-glucopyranoside) (PMGP). Additional related compounds such as 1-O-methyl-15-HT, (8Z)-1-O-methyl-15-HT, and O-methyltenellin A are also produced but the enzymes involved in their biosynthesis have still to be determined. This Beauveria bassiana (strain ARSEF 2860) (White muscardine disease fungus) protein is UDP-glucosyltransferase 1.